We begin with the raw amino-acid sequence, 90 residues long: Small ribosomal subunit protein bS16 (90 aa).

It belongs to the bacterial ribosomal protein bS16 family.

The chain is Small ribosomal subunit protein bS16 from Listeria innocua serovar 6a (strain ATCC BAA-680 / CLIP 11262).